The chain runs to 540 residues: NADH-quinone oxidoreductase subunit N (540 aa).

14 helical membrane passes run 24–44 (LSPM…EAFL), 54–74 (LVLA…LAGT), 88–108 (PTLF…LIIA), 158–178 (APGH…MLLF), 184–204 (LLTM…LCGL), 219–239 (YFLL…LLYG), 263–283 (ALIG…AVPF), 295–315 (PTPI…GAML), 331–351 (PVMW…AVTQ), 357–377 (MLAY…VAAN), 385–405 (MFYL…VTLV), 428–448 (VGGV…TSGF), 462–482 (GAVP…FFYV), and 505–525 (MFTA…GILP).

This sequence belongs to the complex I subunit 2 family. As to quaternary structure, NDH-1 is composed of 14 different subunits. Subunits NuoA, H, J, K, L, M, N constitute the membrane sector of the complex.

The protein localises to the cell membrane. It catalyses the reaction a quinone + NADH + 5 H(+)(in) = a quinol + NAD(+) + 4 H(+)(out). NDH-1 shuttles electrons from NADH, via FMN and iron-sulfur (Fe-S) centers, to quinones in the respiratory chain. The immediate electron acceptor for the enzyme in this species is believed to be a menaquinone. Couples the redox reaction to proton translocation (for every two electrons transferred, four hydrogen ions are translocated across the cytoplasmic membrane), and thus conserves the redox energy in a proton gradient. The chain is NADH-quinone oxidoreductase subunit N from Rhodococcus opacus (strain B4).